The primary structure comprises 509 residues: Lysine--tRNA ligase (509 aa).

Mg(2+) contacts are provided by Glu-419 and Glu-426.

This sequence belongs to the class-II aminoacyl-tRNA synthetase family. As to quaternary structure, homodimer. It depends on Mg(2+) as a cofactor.

It localises to the cytoplasm. It catalyses the reaction tRNA(Lys) + L-lysine + ATP = L-lysyl-tRNA(Lys) + AMP + diphosphate. This Methylobacillus flagellatus (strain ATCC 51484 / DSM 6875 / VKM B-1610 / KT) protein is Lysine--tRNA ligase.